The chain runs to 528 residues: Beta-galactoside alpha-2,6-sialyltransferase 2 (528 aa).

Residues 1–10 (MKPNLKQWKQ) are Cytoplasmic-facing. Residues 11–31 (LMLFGIFAWGLLFLVIFIYFT) traverse the membrane as a helical; Signal-anchor for type II membrane protein segment. At 32-528 (DSNSAEPVPS…CPERNNFPPL (497 aa)) the chain is on the lumenal side. Residues N167, N308, and N338 are each glycosylated (N-linked (GlcNAc...) asparagine). 3 disulfides stabilise this stretch: C254–C519, C297–C448, and C466–C477.

Belongs to the glycosyltransferase 29 family.

It localises to the golgi apparatus. The protein resides in the golgi stack membrane. It carries out the reaction a beta-D-galactoside + CMP-N-acetyl-beta-neuraminate = an N-acetyl-alpha-neuraminyl-(2-&gt;6)-beta-D-galactosyl derivative + CMP + H(+). Functionally, transfers sialic acid from the donor of substrate CMP-sialic acid to galactose containing acceptor substrates. This is Beta-galactoside alpha-2,6-sialyltransferase 2 (ST6GAL2) from Gallus gallus (Chicken).